The primary structure comprises 328 residues: Phosphate acyltransferase (328 aa).

Belongs to the PlsX family. In terms of assembly, homodimer. Probably interacts with PlsY.

It localises to the cytoplasm. It carries out the reaction a fatty acyl-[ACP] + phosphate = an acyl phosphate + holo-[ACP]. Its pathway is lipid metabolism; phospholipid metabolism. In terms of biological role, catalyzes the reversible formation of acyl-phosphate (acyl-PO(4)) from acyl-[acyl-carrier-protein] (acyl-ACP). This enzyme utilizes acyl-ACP as fatty acyl donor, but not acyl-CoA. In Mycoplasma genitalium (strain ATCC 33530 / DSM 19775 / NCTC 10195 / G37) (Mycoplasmoides genitalium), this protein is Phosphate acyltransferase.